Consider the following 248-residue polypeptide: ATP synthase subunit a, chloroplastic (248 aa).

5 helical membrane-spanning segments follow: residues 37–57 (GQVLITSWVVIGILLTVAFLG), 96–116 (VPFVGTLFLFIFVSNWSGALV), 135–155 (INTTVALALLTSGAYFYAGFH), 200–220 (LVVAVLVSLVPLVVPIPMMFL), and 221–241 (GLFTSGIQALIFATLAAAYIG).

This sequence belongs to the ATPase A chain family. In terms of assembly, F-type ATPases have 2 components, CF(1) - the catalytic core - and CF(0) - the membrane proton channel. CF(1) has five subunits: alpha(3), beta(3), gamma(1), delta(1), epsilon(1). CF(0) has four main subunits: a, b, b' and c.

It is found in the plastid. The protein localises to the chloroplast thylakoid membrane. Its function is as follows. Key component of the proton channel; it plays a direct role in the translocation of protons across the membrane. The chain is ATP synthase subunit a, chloroplastic from Staurastrum punctulatum (Green alga).